A 351-amino-acid polypeptide reads, in one-letter code: MVASTLSPPTRGWFDVLDDWLKRDRFVFVGWSGLLLFPTAYLAIGGWLTGTTFVTSWYTHGLASSYLEGANFLTAAVSTPADSMGHSLLLLWGPESQGDFVRWLQLGGLWAFVALHGAFALIGFMLRQFELARLIGIRPYNAIAFSGPIAVFVSVFLLYPLGQSSWFFAPSFGVAAIFRFLLFLQGFHNWTLNPFHMMGVAGILGGALLSAIHGVTVENTLYEDGEQANTFKAFDSTQEEETYSMVTANRFWSQIFGIAFSNKRWLHFFMLFVPVMGLWTSSIGIIGLALNLRAYDFVSQEIRAAEDPEFETFYTKNILLNEGLRAWLAPIDQPHENFVFPEEVLPRGNAL.

Residues 39–59 traverse the membrane as a helical segment; sequence TAYLAIGGWLTGTTFVTSWYT. H116 provides a ligand contact to chlorophyll a. The helical transmembrane segment at 123-139 threads the bilayer; that stretch reads GFMLRQFELARLIGIRP. The pheophytin a site is built by Q128 and N141. Residues 151 to 164 traverse the membrane as a helical segment; sequence VFVSVFLLYPLGQS. H196 serves as a coordination point for chlorophyll a. A helical membrane pass occupies residues 206–226; it reads GALLSAIHGVTVENTLYEDGE. A plastoquinone is bound by residues H213 and F260. H213 is a binding site for Fe cation. H267 is a Fe cation binding site. A helical transmembrane segment spans residues 277–293; that stretch reads GLWTSSIGIIGLALNLR.

Belongs to the reaction center PufL/M/PsbA/D family. In terms of assembly, PSII is composed of 1 copy each of membrane proteins PsbA, PsbB, PsbC, PsbD, PsbE, PsbF, PsbH, PsbI, PsbJ, PsbK, PsbL, PsbM, PsbT, PsbX, PsbY, PsbZ, Psb30/Ycf12, peripheral proteins PsbO, CyanoQ (PsbQ), PsbU, PsbV and a large number of cofactors. It forms dimeric complexes. The D1/D2 heterodimer binds P680, chlorophylls that are the primary electron donor of PSII, and subsequent electron acceptors. It shares a non-heme iron and each subunit binds pheophytin, quinone, additional chlorophylls, carotenoids and lipids. There is also a Cl(-1) ion associated with D1 and D2, which is required for oxygen evolution. The PSII complex binds additional chlorophylls, carotenoids and specific lipids. is required as a cofactor.

It localises to the host cellular thylakoid membrane. It catalyses the reaction 2 a plastoquinone + 4 hnu + 2 H2O = 2 a plastoquinol + O2. In terms of biological role, photosystem II (PSII) is a light-driven water:plastoquinone oxidoreductase that uses light energy to abstract electrons from H(2)O, generating O(2) and a proton gradient subsequently used for ATP formation. It consists of a core antenna complex that captures photons, and an electron transfer chain that converts photonic excitation into a charge separation. The D1/D2 (PsbA/PsbD) reaction center heterodimer binds P680, the primary electron donor of PSII as well as several subsequent electron acceptors. D2 is needed for assembly of a stable PSII complex. The protein is Photosystem II D2 protein (psbD) of Synechococcus.